The sequence spans 1429 residues: DNA-directed RNA polymerase subunit beta' (1429 aa).

Zn(2+) is bound by residues Cys-68, Cys-70, Cys-83, and Cys-86. Mg(2+)-binding residues include Asp-459, Asp-461, and Asp-463. Cys-805, Cys-879, Cys-886, and Cys-889 together coordinate Zn(2+). Positions 1407-1429 (ESFPLLGGDGEPASTTSSTTEGE) are disordered. The segment covering 1419–1429 (ASTTSSTTEGE) has biased composition (polar residues).

Belongs to the RNA polymerase beta' chain family. In terms of assembly, the RNAP catalytic core consists of 2 alpha, 1 beta, 1 beta' and 1 omega subunit. When a sigma factor is associated with the core the holoenzyme is formed, which can initiate transcription. Requires Mg(2+) as cofactor. Zn(2+) is required as a cofactor.

It catalyses the reaction RNA(n) + a ribonucleoside 5'-triphosphate = RNA(n+1) + diphosphate. Its function is as follows. DNA-dependent RNA polymerase catalyzes the transcription of DNA into RNA using the four ribonucleoside triphosphates as substrates. This is DNA-directed RNA polymerase subunit beta' from Rhodopirellula baltica (strain DSM 10527 / NCIMB 13988 / SH1).